Consider the following 240-residue polypeptide: Proteasome subunit alpha (240 aa).

This sequence belongs to the peptidase T1A family. The 20S proteasome core is composed of 14 alpha and 14 beta subunits that assemble into four stacked heptameric rings, resulting in a barrel-shaped structure. The two inner rings, each composed of seven catalytic beta subunits, are sandwiched by two outer rings, each composed of seven alpha subunits. The catalytic chamber with the active sites is on the inside of the barrel. Has a gated structure, the ends of the cylinder being occluded by the N-termini of the alpha-subunits. Is capped at one or both ends by the proteasome regulatory ATPase, PAN.

It localises to the cytoplasm. The formation of the proteasomal ATPase PAN-20S proteasome complex, via the docking of the C-termini of PAN into the intersubunit pockets in the alpha-rings, triggers opening of the gate for substrate entry. Interconversion between the open-gate and close-gate conformations leads to a dynamic regulation of the 20S proteasome proteolysis activity. Its function is as follows. Component of the proteasome core, a large protease complex with broad specificity involved in protein degradation. The protein is Proteasome subunit alpha of Metallosphaera sedula (strain ATCC 51363 / DSM 5348 / JCM 9185 / NBRC 15509 / TH2).